Consider the following 677-residue polypeptide: AP-2 complex subunit beta (677 aa).

Residues 597-677 (RLRTRDSNPS…PMTPETHLMD (81 aa)) are disordered. A compositionally biased stretch (basic residues) spans 616 to 627 (KKYNHFHQKSQT). The segment covering 636–654 (RNSWNPSPFSDESNSNTFS) has biased composition (polar residues).

The protein belongs to the adaptor complexes large subunit family. In terms of assembly, adaptor protein complex 2 (AP-2) is a heterotetramer composed of two large adaptins (alpha-type subunit apl3 and beta-type subunit apl1), a medium chain (mu-type subunit apm4) and a small adaptin (sigma-type subunit aps2).

It localises to the cell membrane. Its subcellular location is the membrane. The protein localises to the coated pit. In terms of biological role, adaptins are components of the adaptor complexes which link clathrin to receptors in coated vesicles. Clathrin-associated protein complexes are believed to interact with the cytoplasmic tails of membrane proteins, leading to their selection and concentration. Beta adaptin is a subunit of the plasma membrane adaptor. This chain is AP-2 complex subunit beta (apl1), found in Schizosaccharomyces pombe (strain 972 / ATCC 24843) (Fission yeast).